The chain runs to 276 residues: MKVNFTKMQGSGNDFVVIDATKTPFQLTTSQIQKMANRRFGVGFDQLLVIEPPKNNSVDFHFRIFNADGSEVGQCGNGARCIARFIRAHQLSDREELRVSTLNEVLELKIQPDGKVSVKMGVPRFEPTEIPFIASGVANFYDIAVDNQIVKLGVVNIGNPHAIIPVERINAEEVGKLGARLSVHECFPEGANVGFMQVIDPQNIRLRVYERGTGETLACGSNACAAVAVGRRCGLLQERVVVSQPGGSLTIDWQGPLTPVTMTGPATTVFCGEWLD.

3 residues coordinate substrate: Asn13, Gln46, and Asn66. Residue Cys75 is the Proton donor of the active site. Residues Gly76–Asn77, Asn159, Asn192, and Glu210–Arg211 each bind substrate. Residue Cys219 is the Proton acceptor of the active site. Gly220–Ser221 serves as a coordination point for substrate.

This sequence belongs to the diaminopimelate epimerase family. As to quaternary structure, homodimer.

Its subcellular location is the cytoplasm. It catalyses the reaction (2S,6S)-2,6-diaminopimelate = meso-2,6-diaminopimelate. The protein operates within amino-acid biosynthesis; L-lysine biosynthesis via DAP pathway; DL-2,6-diaminopimelate from LL-2,6-diaminopimelate: step 1/1. Catalyzes the stereoinversion of LL-2,6-diaminopimelate (L,L-DAP) to meso-diaminopimelate (meso-DAP), a precursor of L-lysine and an essential component of the bacterial peptidoglycan. The polypeptide is Diaminopimelate epimerase (Coxiella burnetii (strain CbuK_Q154) (Coxiella burnetii (strain Q154))).